The primary structure comprises 79 residues: Acyl carrier protein (79 aa).

In terms of domain architecture, Carrier spans 2–77; sequence SDIEARVKKI…NAVDYATKNQ (76 aa). At Ser-37 the chain carries O-(pantetheine 4'-phosphoryl)serine.

This sequence belongs to the acyl carrier protein (ACP) family. In terms of processing, 4'-phosphopantetheine is transferred from CoA to a specific serine of apo-ACP by AcpS. This modification is essential for activity because fatty acids are bound in thioester linkage to the sulfhydryl of the prosthetic group.

It localises to the cytoplasm. It participates in lipid metabolism; fatty acid biosynthesis. In terms of biological role, carrier of the growing fatty acid chain in fatty acid biosynthesis. The sequence is that of Acyl carrier protein from Variovorax paradoxus (strain S110).